A 324-amino-acid polypeptide reads, in one-letter code: Quinolinate synthase (324 aa).

Iminosuccinate-binding residues include H39 and S56. [4Fe-4S] cluster is bound at residue C101. Iminosuccinate is bound by residues Y127 to N129 and S144. C187 contributes to the [4Fe-4S] cluster binding site. Iminosuccinate contacts are provided by residues H213–E215 and T230. C280 is a [4Fe-4S] cluster binding site.

The protein belongs to the quinolinate synthase family. Type 2 subfamily. Requires [4Fe-4S] cluster as cofactor.

It localises to the cytoplasm. It carries out the reaction iminosuccinate + dihydroxyacetone phosphate = quinolinate + phosphate + 2 H2O + H(+). Its pathway is cofactor biosynthesis; NAD(+) biosynthesis; quinolinate from iminoaspartate: step 1/1. In terms of biological role, catalyzes the condensation of iminoaspartate with dihydroxyacetone phosphate to form quinolinate. This Trichormus variabilis (strain ATCC 29413 / PCC 7937) (Anabaena variabilis) protein is Quinolinate synthase.